The following is a 235-amino-acid chain: Hydroxyacylglutathione hydrolase (235 aa).

Zn(2+) contacts are provided by histidine 53, histidine 55, aspartate 57, histidine 58, histidine 109, aspartate 127, and histidine 165.

The protein belongs to the metallo-beta-lactamase superfamily. Glyoxalase II family. In terms of assembly, monomer. The cofactor is Zn(2+).

The catalysed reaction is an S-(2-hydroxyacyl)glutathione + H2O = a 2-hydroxy carboxylate + glutathione + H(+). Its pathway is secondary metabolite metabolism; methylglyoxal degradation; (R)-lactate from methylglyoxal: step 2/2. Thiolesterase that catalyzes the hydrolysis of S-D-lactoyl-glutathione to form glutathione and D-lactic acid. The protein is Hydroxyacylglutathione hydrolase of Glaesserella parasuis serovar 5 (strain SH0165) (Haemophilus parasuis).